A 211-amino-acid chain; its full sequence is Thymidylate kinase (211 aa).

11 to 18 provides a ligand contact to ATP; that stretch reads GPDGAGKT.

Belongs to the thymidylate kinase family.

It carries out the reaction dTMP + ATP = dTDP + ADP. Its function is as follows. Phosphorylation of dTMP to form dTDP in both de novo and salvage pathways of dTTP synthesis. This is Thymidylate kinase from Streptococcus pyogenes serotype M1.